Consider the following 97-residue polypeptide: Large ribosomal subunit protein eL21 (97 aa).

Residues 1–24 form a disordered region; that stretch reads MQKSEGFRSKTRYKLQKHPRQKGM. Over residues 9–21 the composition is skewed to basic residues; that stretch reads SKTRYKLQKHPRQ.

The protein belongs to the eukaryotic ribosomal protein eL21 family.

The sequence is that of Large ribosomal subunit protein eL21 from Methanococcus maripaludis (strain DSM 14266 / JCM 13030 / NBRC 101832 / S2 / LL).